A 526-amino-acid chain; its full sequence is Cholesterol side-chain cleavage enzyme, mitochondrial (526 aa).

Residues 1–36 (MLAKGLCLRSVLVKSCQPFLSPVWQGPGLATGNGAG) constitute a mitochondrion transit peptide. Cysteine 459 provides a ligand contact to heme.

Belongs to the cytochrome P450 family. Interacts with FDX1/adrenodoxin. Heme is required as a cofactor. As to expression, expressed in the kidney where it localizes to the distal convoluted tubule and the thick ascending limb of the loop of Henle (at protein level). In the ovary, highly expressed in interstitial cells (at protein level). Also expressed in adrenal gland and testis.

The protein resides in the mitochondrion inner membrane. The catalysed reaction is 6 reduced [adrenodoxin] + cholesterol + 3 O2 + 6 H(+) = 4-methylpentanal + pregnenolone + 6 oxidized [adrenodoxin] + 4 H2O. It catalyses the reaction 2 reduced [adrenodoxin] + cholesterol + O2 + 2 H(+) = (22R)-hydroxycholesterol + 2 oxidized [adrenodoxin] + H2O. The enzyme catalyses (22R)-hydroxycholesterol + 2 reduced [adrenodoxin] + O2 + 2 H(+) = (20R,22R)-20,22-dihydroxycholesterol + 2 oxidized [adrenodoxin] + H2O. It carries out the reaction (20R,22R)-20,22-dihydroxycholesterol + 2 reduced [adrenodoxin] + O2 + 2 H(+) = 4-methylpentanal + pregnenolone + 2 oxidized [adrenodoxin] + 2 H2O. It functions in the pathway lipid metabolism; C21-steroid hormone metabolism. Its pathway is steroid metabolism; cholesterol metabolism. A cytochrome P450 monooxygenase that catalyzes the side-chain hydroxylation and cleavage of cholesterol to pregnenolone, the precursor of most steroid hormones. Catalyzes three sequential oxidation reactions of cholesterol, namely the hydroxylation at C22 followed with the hydroxylation at C20 to yield 20R,22R-hydroxycholesterol that is further cleaved between C20 and C22 to yield the C21-steroid pregnenolone and 4-methylpentanal. Mechanistically, uses molecular oxygen inserting one oxygen atom into a substrate and reducing the second into a water molecule. Two electrons are provided by NADPH via a two-protein mitochondrial transfer system comprising flavoprotein FDXR (adrenodoxin/ferredoxin reductase) and nonheme iron-sulfur protein FDX1 or FDX2 (adrenodoxin/ferredoxin). This chain is Cholesterol side-chain cleavage enzyme, mitochondrial, found in Rattus norvegicus (Rat).